The sequence spans 432 residues: MKLVTRMWSILIVFFLAVLQPAQAEVRIVIDEGVDSARPIAVVPFKWNGPGSAPADIADIIAADLRHSGKFNPIPVNRMPQHPTSVSEVNPEAWAALGIDAVVVGHVTPANGSFNIAYQLVDTIGATGTAGTVLTQNQYTVTAKWLRYGAHTVSDEVFEKLTGIRGAFRTRIAYIVQKHGGSQPYEVRVSDYDGFNQFVVNRSAQPLMSPAWSHDGKKLAYVSFENKKSQLVVQDLGSGARKVVASFNGHNGAPAFSPDGSRLAFASSKDGVLNIYVMNLGSGQISQLTSGTGNNTEPSWSPDGQTIVFTSDRSGSPQVYQMSASGGGASLVSTGGRSYSGQMTADGSAIIMISRDNIVKKDLASGSTEVLSSTFLDENPSISPNGIMIIYSSTQGLGKVLQLVSADGRFKARLPGNDGQVKFPAWSPYLTK.

An N-terminal signal peptide occupies residues 1–24 (MKLVTRMWSILIVFFLAVLQPAQA).

Belongs to the TolB family. The Tol-Pal system is composed of five core proteins: the inner membrane proteins TolA, TolQ and TolR, the periplasmic protein TolB and the outer membrane protein Pal. They form a network linking the inner and outer membranes and the peptidoglycan layer.

The protein localises to the periplasm. Functionally, part of the Tol-Pal system, which plays a role in outer membrane invagination during cell division and is important for maintaining outer membrane integrity. The polypeptide is Tol-Pal system protein TolB (Pasteurella multocida (strain Pm70)).